Reading from the N-terminus, the 221-residue chain is Small ribosomal subunit protein eS8 (221 aa).

Disordered stretches follow at residues 1 to 41 (MGIS…LSSN) and 128 to 169 (TPAA…TLDP). Residues 8–26 (MHKRRATGGKQKAWRKKRK) are compositionally biased toward basic residues. Over residues 146 to 169 (EETKKSNHVTRKLEKRKEGRTLDP) the composition is skewed to basic and acidic residues.

It belongs to the eukaryotic ribosomal protein eS8 family.

The chain is Small ribosomal subunit protein eS8 (RPS8) from Zea mays (Maize).